Reading from the N-terminus, the 285-residue chain is Hypersensitive-induced reaction 1 protein (285 aa).

The N-myristoyl glycine moiety is linked to residue Gly2. Residues 118–190 adopt a coiled-coil conformation; the sequence is FEQKNEIAKS…EKILQIKRAE (73 aa).

As to quaternary structure, homo- and heterodimer. Interacts with LRR1 (via LRR domain). As to expression, constitutively expressed in stems, roots and flowers, but not in leaves and fruits.

Functionally, positive regulator of hypersensitive response (HR)-like cell death. May be involved in potassium ion channel regulation. The sequence is that of Hypersensitive-induced reaction 1 protein from Capsicum annuum (Capsicum pepper).